We begin with the raw amino-acid sequence, 427 residues long: Trigger factor (427 aa).

The 86-residue stretch at 163-248 folds into the PPIase FKBP-type domain; it reads GDTVVIDFVG…IHEVKAKEVP (86 aa).

It belongs to the FKBP-type PPIase family. Tig subfamily.

Its subcellular location is the cytoplasm. It carries out the reaction [protein]-peptidylproline (omega=180) = [protein]-peptidylproline (omega=0). Involved in protein export. Acts as a chaperone by maintaining the newly synthesized protein in an open conformation. Functions as a peptidyl-prolyl cis-trans isomerase. The chain is Trigger factor from Streptococcus suis (strain 98HAH33).